Consider the following 79-residue polypeptide: Small ribosomal subunit protein bS21 (79 aa).

The tract at residues A58–R79 is disordered.

This sequence belongs to the bacterial ribosomal protein bS21 family.

This chain is Small ribosomal subunit protein bS21, found in Beijerinckia indica subsp. indica (strain ATCC 9039 / DSM 1715 / NCIMB 8712).